A 93-amino-acid polypeptide reads, in one-letter code: UPF0297 protein PEPE_1262 (93 aa).

The protein belongs to the UPF0297 family.

In Pediococcus pentosaceus (strain ATCC 25745 / CCUG 21536 / LMG 10740 / 183-1w), this protein is UPF0297 protein PEPE_1262.